The primary structure comprises 112 residues: MAKIQFIQGVDEEAIPDVKLSRSQDGANGIAKFYFDKPTVFDVYQGEITGLYLIDEEGELSTRTVYAKFINGKPQSIEASYIMNNREEWERFIRFMERYAKQNDLSFTKAKN.

The protein belongs to the Psb28 family. In terms of assembly, part of the photosystem II complex.

It localises to the plastid. The protein resides in the cyanelle thylakoid membrane. This chain is Photosystem II reaction center Psb28 protein, found in Cyanophora paradoxa.